The sequence spans 1453 residues: ABC transporter G family member 34 (1453 aa).

A disordered region spans residues 1 to 24; it reads MLGRDEDLVRTMSGRGSLGSTSHR. Residues 173 to 446 enclose the ABC transporter 1 domain; it reads LGLFHLLPSK…FEYMGFKCPE (274 aa). 206-213 contributes to the ATP binding site; the sequence is GPPSSGKT. An ABC transmembrane type-2 1 domain is found at 524–737; it reads DLFKACFDRE…GQTALVINEF (214 aa). 6 consecutive transmembrane segments (helical) span residues 542–562, 582–602, 621–641, 661–681, 687–707, and 773–793; these read FVYV…MTVY, LFFS…FTVM, FALP…VIWI, LLAY…LGAL, IANS…GFII, and FWIC…CYII. The region spanning 852–1105 is the ABC transporter 2 domain; sequence LAFNNVNYYV…LVEYFEAIEG (254 aa). 897-904 provides a ligand contact to ATP; the sequence is GVSGAGKT. In terms of domain architecture, ABC transmembrane type-2 2 spans 1177–1391; that stretch reads TQTKACFWKM…TLYGIITSQV (215 aa). 7 consecutive transmembrane segments (helical) span residues 1196-1216, 1230-1250, 1289-1309, 1311-1331, 1341-1361, 1366-1386, and 1422-1442; these read YNAI…LLFW, NFFG…AATV, IQTG…WTVV, FFWF…YGMM, IAGI…GFLI, IPIW…LYGI, and FLPV…FAFA.

Belongs to the ABC transporter superfamily. ABCG family. PDR (TC 3.A.1.205) subfamily. Expressed in roots at low levels.

Its subcellular location is the membrane. May be a general defense protein. This Arabidopsis thaliana (Mouse-ear cress) protein is ABC transporter G family member 34 (ABCG34).